We begin with the raw amino-acid sequence, 414 residues long: 3-oxoacyl-[acyl-carrier-protein] synthase 2 (414 aa).

One can recognise a Ketosynthase family 3 (KS3) domain in the interval 3–413 (KRRVVVTGMG…GTNGSLIFKR (411 aa)). Active-site for beta-ketoacyl synthase activity residues include cysteine 164, histidine 304, and histidine 342.

Belongs to the thiolase-like superfamily. Beta-ketoacyl-ACP synthases family. Homodimer.

It carries out the reaction a fatty acyl-[ACP] + malonyl-[ACP] + H(+) = a 3-oxoacyl-[ACP] + holo-[ACP] + CO2. The enzyme catalyses (9Z)-hexadecenoyl-[ACP] + malonyl-[ACP] + H(+) = 3-oxo-(11Z)-octadecenoyl-[ACP] + holo-[ACP] + CO2. Its pathway is lipid metabolism; fatty acid biosynthesis. In terms of biological role, involved in the type II fatty acid elongation cycle. Catalyzes the elongation of a wide range of acyl-ACP by the addition of two carbons from malonyl-ACP to an acyl acceptor. Can efficiently catalyze the conversion of palmitoleoyl-ACP (cis-hexadec-9-enoyl-ACP) to cis-vaccenoyl-ACP (cis-octadec-11-enoyl-ACP), an essential step in the thermal regulation of fatty acid composition. The polypeptide is 3-oxoacyl-[acyl-carrier-protein] synthase 2 (fabF) (Vibrio cholerae serotype O1 (strain ATCC 39315 / El Tor Inaba N16961)).